A 562-amino-acid polypeptide reads, in one-letter code: Arginine--tRNA ligase (562 aa).

A 'HIGH' region motif is present at residues 122–132 (PNIAKDMHVGH).

This sequence belongs to the class-I aminoacyl-tRNA synthetase family. Monomer.

It localises to the cytoplasm. It carries out the reaction tRNA(Arg) + L-arginine + ATP = L-arginyl-tRNA(Arg) + AMP + diphosphate. The sequence is that of Arginine--tRNA ligase from Chlamydia felis (strain Fe/C-56) (Chlamydophila felis).